Here is a 324-residue protein sequence, read N- to C-terminus: NADH-ubiquinone oxidoreductase chain 1 (324 aa).

Helical transmembrane passes span Leu-9 to Ile-29, Phe-75 to Met-95, Leu-106 to Gly-126, Ile-146 to Tyr-166, Ser-177 to Ala-197, Leu-228 to Phe-248, Glu-259 to Val-279, and Phe-299 to Gly-319.

It belongs to the complex I subunit 1 family.

The protein localises to the mitochondrion inner membrane. The catalysed reaction is a ubiquinone + NADH + 5 H(+)(in) = a ubiquinol + NAD(+) + 4 H(+)(out). Functionally, core subunit of the mitochondrial membrane respiratory chain NADH dehydrogenase (Complex I) that is believed to belong to the minimal assembly required for catalysis. Complex I functions in the transfer of electrons from NADH to the respiratory chain. The immediate electron acceptor for the enzyme is believed to be ubiquinone. The sequence is that of NADH-ubiquinone oxidoreductase chain 1 (MT-ND1) from Cyprinus carpio (Common carp).